Here is a 76-residue protein sequence, read N- to C-terminus: Bacteriocin uberolysin (76 aa).

A propeptide spanning residues 1–6 (MDILLE) is cleaved from the precursor. Residues 7 to 76 (LAGYTGIASG…RNLKAQAVIW (70 aa)) constitute a cross-link (cyclopeptide (Leu-Trp)).

This sequence belongs to the bacteriocin class V family.

It localises to the secreted. In terms of biological role, cyclopeptide antibiotic with bacteriolytic activity against most streptococci (except S.rattus and S.mutans), Listeria spp., enterococci and staphylococci. The sequence is that of Bacteriocin uberolysin (ublA) from Streptococcus uberis.